Here is a 199-residue protein sequence, read N- to C-terminus: Phycocyanobilin lyase CpcT (199 aa).

The protein belongs to the CpcT/CpeT biliprotein lyase family.

In terms of biological role, catalyzes the site-selective attachment of phycocyanobilin (PCB) to 'Cys-154' of C-phycocyanin subunit beta (CpcB) and to 'Cys-153' of phycoerythrocyanin subunit beta (PecB). Does not have chromophore lyase activity for ApcA1, ApcA2, ApcB, ApcD, ApcF or PecA. This is Phycocyanobilin lyase CpcT (cpcT1) from Nostoc sp. (strain PCC 7120 / SAG 25.82 / UTEX 2576).